Here is a 210-residue protein sequence, read N- to C-terminus: Ribosomal RNA small subunit methyltransferase G (210 aa).

S-adenosyl-L-methionine-binding positions include Gly76, Met81, 127 to 128 (VE), and Arg145.

Belongs to the methyltransferase superfamily. RNA methyltransferase RsmG family.

It localises to the cytoplasm. The enzyme catalyses guanosine(527) in 16S rRNA + S-adenosyl-L-methionine = N(7)-methylguanosine(527) in 16S rRNA + S-adenosyl-L-homocysteine. Its function is as follows. Specifically methylates the N7 position of guanine in position 527 of 16S rRNA. The polypeptide is Ribosomal RNA small subunit methyltransferase G (Acinetobacter baumannii (strain AB307-0294)).